We begin with the raw amino-acid sequence, 451 residues long: Exodeoxyribonuclease 7 large subunit (451 aa).

The protein belongs to the XseA family. Heterooligomer composed of large and small subunits.

It localises to the cytoplasm. The enzyme catalyses Exonucleolytic cleavage in either 5'- to 3'- or 3'- to 5'-direction to yield nucleoside 5'-phosphates.. Bidirectionally degrades single-stranded DNA into large acid-insoluble oligonucleotides, which are then degraded further into small acid-soluble oligonucleotides. In Neisseria meningitidis serogroup A / serotype 4A (strain DSM 15465 / Z2491), this protein is Exodeoxyribonuclease 7 large subunit.